The sequence spans 149 residues: Golgi apparatus membrane protein tvp-18 (149 aa).

Asn11 carries an N-linked (GlcNAc...) asparagine glycan. 4 helical membrane passes run 18-38 (WLGI…IFTF), 41-61 (IIIV…FVEV), 84-103 (NYTR…LSCI), and 108-128 (SLLV…LAAL).

Belongs to the TVP18 family.

The protein localises to the golgi apparatus membrane. In terms of biological role, golgi membrane protein involved in vesicular trafficking. This Neurospora crassa (strain ATCC 24698 / 74-OR23-1A / CBS 708.71 / DSM 1257 / FGSC 987) protein is Golgi apparatus membrane protein tvp-18 (tvp-18).